Reading from the N-terminus, the 320-residue chain is tRNA N6-adenosine threonylcarbamoyltransferase (320 aa).

2 residues coordinate Fe cation: histidine 113 and histidine 117. Substrate contacts are provided by residues 143–147 (VVSGG), aspartate 176, glycine 189, aspartate 193, and asparagine 281. Fe cation is bound at residue aspartate 305.

This sequence belongs to the KAE1 / TsaD family. Requires Fe(2+) as cofactor.

The protein localises to the cytoplasm. It catalyses the reaction L-threonylcarbamoyladenylate + adenosine(37) in tRNA = N(6)-L-threonylcarbamoyladenosine(37) in tRNA + AMP + H(+). Its function is as follows. Required for the formation of a threonylcarbamoyl group on adenosine at position 37 (t(6)A37) in tRNAs that read codons beginning with adenine. Is involved in the transfer of the threonylcarbamoyl moiety of threonylcarbamoyl-AMP (TC-AMP) to the N6 group of A37, together with TsaE and TsaB. TsaD likely plays a direct catalytic role in this reaction. This Mycoplasmoides gallisepticum (strain R(low / passage 15 / clone 2)) (Mycoplasma gallisepticum) protein is tRNA N6-adenosine threonylcarbamoyltransferase.